The following is a 229-amino-acid chain: Uracil-DNA glycosylase (229 aa).

Asp70 functions as the Proton acceptor in the catalytic mechanism.

This sequence belongs to the uracil-DNA glycosylase (UDG) superfamily. UNG family.

Its subcellular location is the cytoplasm. The catalysed reaction is Hydrolyzes single-stranded DNA or mismatched double-stranded DNA and polynucleotides, releasing free uracil.. Excises uracil residues from the DNA which can arise as a result of misincorporation of dUMP residues by DNA polymerase or due to deamination of cytosine. In Chlamydia abortus (strain DSM 27085 / S26/3) (Chlamydophila abortus), this protein is Uracil-DNA glycosylase.